Reading from the N-terminus, the 131-residue chain is Ribosome-binding factor A (131 aa).

This sequence belongs to the RbfA family. In terms of assembly, monomer. Binds 30S ribosomal subunits, but not 50S ribosomal subunits or 70S ribosomes.

It localises to the cytoplasm. Functionally, one of several proteins that assist in the late maturation steps of the functional core of the 30S ribosomal subunit. Associates with free 30S ribosomal subunits (but not with 30S subunits that are part of 70S ribosomes or polysomes). Required for efficient processing of 16S rRNA. May interact with the 5'-terminal helix region of 16S rRNA. The polypeptide is Ribosome-binding factor A (Picosynechococcus sp. (strain ATCC 27264 / PCC 7002 / PR-6) (Agmenellum quadruplicatum)).